The chain runs to 283 residues: MDQKIIQLSNNVQVANDKPFVLFGGMNVLESRDLAMSIAEHYVEVTQKLGIPYVFKASFDKANRSSVNSYRGPGMEEGLRIFEEIKSTFNVPMITDVHEIHQCAPVAEVVDIIQLPAFLARQTDLVVAMAKTGAVINVKKPQFLAPHEMRHIITKFNEAGNDNIILCERGSSFGYNNLVVDMLGMDEMKQTGYPVIFDATHALQRPGGRADSAGGRRAQATELARSGMALGLAGLFIEAHPDPDNAKCDGPCALPLHLLEKYLTQMKAVDELVKSFEFIDTSK.

It belongs to the KdsA family.

It localises to the cytoplasm. The enzyme catalyses D-arabinose 5-phosphate + phosphoenolpyruvate + H2O = 3-deoxy-alpha-D-manno-2-octulosonate-8-phosphate + phosphate. It participates in carbohydrate biosynthesis; 3-deoxy-D-manno-octulosonate biosynthesis; 3-deoxy-D-manno-octulosonate from D-ribulose 5-phosphate: step 2/3. The protein operates within bacterial outer membrane biogenesis; lipopolysaccharide biosynthesis. The polypeptide is 2-dehydro-3-deoxyphosphooctonate aldolase (Shewanella frigidimarina (strain NCIMB 400)).